Here is a 500-residue protein sequence, read N- to C-terminus: Glutamate--tRNA ligase (500 aa).

Residues 12 to 22 (PSPTGHLHIGN) carry the 'HIGH' region motif. The 'KMSKS' region motif lies at 259–263 (KLSKR). Lysine 262 is an ATP binding site.

Belongs to the class-I aminoacyl-tRNA synthetase family. Glutamate--tRNA ligase type 1 subfamily. Monomer.

Its subcellular location is the cytoplasm. The enzyme catalyses tRNA(Glu) + L-glutamate + ATP = L-glutamyl-tRNA(Glu) + AMP + diphosphate. In terms of biological role, catalyzes the attachment of glutamate to tRNA(Glu) in a two-step reaction: glutamate is first activated by ATP to form Glu-AMP and then transferred to the acceptor end of tRNA(Glu). This is Glutamate--tRNA ligase from Lactobacillus delbrueckii subsp. bulgaricus (strain ATCC 11842 / DSM 20081 / BCRC 10696 / JCM 1002 / NBRC 13953 / NCIMB 11778 / NCTC 12712 / WDCM 00102 / Lb 14).